The sequence spans 371 residues: MAAAEAANCIMENFVATLANGMSLQPPLEEVSCGQAESSEKPNAEDMTSKDYYFDSYAHFGIHEEMLKDEVRTLTYRNSMFHNRHLFKDKVVLDVGSGTGILCMFAAKAGARKVIGIECSSISDYAVKIVKANKLDHVVTIIKGKVEEVELPVEKVDIIISEWMGYCLFYESMLNTVLYARDKWLAPDGLIFPDRATLYVTAIEDRQYKDYKIHWWENVYGFDMSCIKDVAIKEPLVDVVDPKQLVTNACLIKEVDIYTVKVEDLTFTSPFCLQVKRNDYVHALVAYFNIEFTRCHKRTGFSTSPESPYTHWKQTVFYMEDYLTVKTGEEIFGTIGMRPNAKNNRDLDFTIDLDFKGQLCELSCSTDYRMR.

The SAM-dependent MTase PRMT-type domain maps to 50-361; it reads KDYYFDSYAH…DLDFKGQLCE (312 aa). Positions 63, 72, 96, and 118 each coordinate S-adenosyl-L-methionine. Arginine 72 lines the S-adenosyl-L-homocysteine pocket. Residue glutamate 118 coordinates S-adenosyl-L-homocysteine. Lysine 134 carries the N6-succinyllysine modification. Lysine 145 is covalently cross-linked (Glycyl lysine isopeptide (Lys-Gly) (interchain with G-Cter in ubiquitin)). S-adenosyl-L-homocysteine-binding residues include valine 146 and glutamate 147. Glutamate 147 is an S-adenosyl-L-methionine binding site. Residues glutamate 162 and glutamate 171 contribute to the active site. 2 positions are modified to N6-acetyllysine: lysine 228 and lysine 233. Phosphoserine occurs at positions 304 and 307.

It belongs to the class I-like SAM-binding methyltransferase superfamily. Protein arginine N-methyltransferase family. As to quaternary structure, homodimer. Homooctamer; individual homodimers associates to form a homooctamer. Individual homodimers can associate to form a homohexamer. Heterodimer with PRMT8. Interacts with BTG1, BTG2, NFATC2IP and IFNAR1. Interacts with and methylates CHTOP, thereby enabling the interaction of CHTOP with the 5FMC complex. Interacts with ILF3 and SUPT5H. Interacts with and methylates FOXO1, leading to the nuclear retention of FOXO1 and the stimulation of FOXO1 transcriptional activity. Methylation of FOXO1 is increased upon oxidative stress. Interacts with and probably methylates ATXN2L. Component of the methylosome, a 20S complex containing at least CLNS1A/pICln, PRMT5/SKB1, WDR77/MEP50, PRMT1 and ERH. Interacts with DHX9 (via RGG region). Interacts (via N-terminus) with HABP4. Interacts with MAP3K5/ASK1; the interaction results in MAP3K5 methylation by PRMT1 which inhibits MAP3K5 activation. Interacts with TRIM48; the interaction results in ubiquitination of PRMT1 by TRIM48, leading to PRMT1 proteasomal degradation and activation of MAP3K5. Interacts with GATOR1 complex; this interaction is S-adenosyl-L-methionine (SAM) dependent and is perturbated by SAMTOR in a SAM-sensitive manner. Interacts with GFI1; promoting recognition and binding of MRE11 and TP53BP1 substrates by PRMT1. Polyubiquitinated at Lys-145 by the SCF(FBXL17) complex, leading to its subsequent degradation. Ubiquitination is regulated by acetylation at Lys-228 and Lys-233. Polyubiquitinated by E3 ubiquitin-protein ligase TRIM48, leading to suppression of MAP3K5/ASK1 methylation and subsequent MAP3K5 activation. In terms of processing, acetylation at Lys-228 and Lys-233 regulates ubiquitination by the SCF(FBXL17) complex. Acetylated at Lys-233 by p300/EP300. Deacetylated at Lys-228 and Lys-233 by SIRT1. In terms of tissue distribution, widely expressed. Expressed strongly in colorectal cancer cells (at protein level). Expressed strongly in colorectal cancer tissues compared to wild-type colon samples (at protein level). Expressed strongly in colorectal cancer tissues compared to wild-type colon samples.

It is found in the nucleus. The protein localises to the nucleoplasm. It localises to the cytoplasm. The protein resides in the cytosol. Its subcellular location is the lysosome membrane. It carries out the reaction L-arginyl-[protein] + 2 S-adenosyl-L-methionine = N(omega),N(omega)-dimethyl-L-arginyl-[protein] + 2 S-adenosyl-L-homocysteine + 2 H(+). The enzyme catalyses L-arginyl-[protein] + S-adenosyl-L-methionine = N(omega)-methyl-L-arginyl-[protein] + S-adenosyl-L-homocysteine + H(+). The catalysed reaction is N(omega)-methyl-L-arginyl-[protein] + S-adenosyl-L-methionine = N(omega),N(omega)-dimethyl-L-arginyl-[protein] + S-adenosyl-L-homocysteine + H(+). In terms of biological role, arginine methyltransferase that methylates (mono and asymmetric dimethylation) the guanidino nitrogens of arginyl residues present in proteins such as ESR1, histone H2, H3 and H4, FMR1, ILF3, HNRNPA1, HNRNPD, NFATC2IP, SUPT5H, TAF15, EWS, HABP4, SERBP1, RBM15, FOXO1, CHTOP, MAP3K5/ASK1, MICU1 and NPRL2. Constitutes the main enzyme that mediates monomethylation and asymmetric dimethylation of histone H4 'Arg-3' (H4R3me1 and H4R3me2a, respectively), a specific tag for epigenetic transcriptional activation. May be involved in the regulation of TAF15 transcriptional activity, act as an activator of estrogen receptor (ER)-mediated transactivation, play a key role in neurite outgrowth and act as a negative regulator of megakaryocytic differentiation, by modulating p38 MAPK pathway. Methylates RBM15, promoting ubiquitination and degradation of RBM15. Methylates MRE11 and TP53BP1, promoting the DNA damage response. Methylates FOXO1 and retains it in the nucleus increasing its transcriptional activity. Methylates CHTOP and this methylation is critical for its 5-hydroxymethylcytosine (5hmC)-binding activity. Methylates MAP3K5/ASK1 at 'Arg-78' and 'Arg-80' which promotes association of MAP3K5 with thioredoxin and negatively regulates MAP3K5 association with TRAF2, inhibiting MAP3K5 stimulation and MAP3K5-induced activation of JNK. Methylates H4R3 in genes involved in glioblastomagenesis in a CHTOP- and/or TET1-dependent manner. Plays a role in regulating alternative splicing in the heart. Methylates NPRL2 at 'Arg-78' leading to inhibition of its GTPase activator activity and then the GATOR1 complex and consequently inducing timely mTORC1 activation under methionine-sufficient conditions. In Homo sapiens (Human), this protein is Protein arginine N-methyltransferase 1.